The sequence spans 946 residues: MSCVAMKYCHESWCLLLSLLLFAIWEPGSGQLRYSVPEEAKHGTFVGRIAQDLGLELTELVPRLFRVASKDRGDLLEVNLQNGILFVNSRIDREELCGRSAECSIHLEVIVDRPLQVFHVEVEVRDINDNPPVFPTTEKNLFVSESRALDPHFSLEGASDADIGTNALLTYRLSPSEYFSLEVPTTDELVKPLQLVLKKPLDRERASELHLVVKATDGGKPELTGTLELHITVLDANDNAPAFDRAIYRVKLVENARNGTVVIRLNASDLDEGSNGQILYSFAADVSPKTEATFHIDSVSGEIKVNGKIDFEETNLWKIQAEAVDKGSPPMFGHCTILIEVLDINDNAPKIIVTSLSLPVQEDAPVGTVIALISVMDPDSTVNGQVTCSLSPHVPFKLVSTFKNYYSLVLDSALDRETTADYKVVVTARDGGSPALWATASVSVEVADVNDNAPAFAQSEYTVFVKENNPPGVHVFTVLAMDADAQENALVSYSLVERRVGERLLSSYVSVHAESGKVFALQPLDHEELELLQFQVTAKDAGVPALGSNVTLQVFVLDENDNAPTLLPHGAVGAGGAVSELVPRSVGSGHVVAKVRAVDADSGYNAWLSYELQFRAGSVRSPFRVGLYTGEISITRALDEADAPRQRLLVLVKDHGEPALTATATVLVSLVESNQAPKASSRVLGPAASESSVVDVNVYLIIAICAVSSLLVLTLVLYTALRCSALPTEVTCGPGKPMLVCSSAVGSWSYSQQRRQRVCSGEGPPKTDLMAFSPSVPPGLGSGDSGVQQEIFENPRQPNPDWRYSASLRAGMHSSVHLEEAGILRAGPGGPDQQWPTVSSATPEPEAGEVSPPVGAGVNSNSWTFKYGPGNPKQSGPGELPDKFIIPGSPAIISIRQEPANNQIDKSDFITFGKKEETKKKKKKKKGNKTQEKKEKGNSTTDNSDQ.

The first 30 residues, 1–30 (MSCVAMKYCHESWCLLLSLLLFAIWEPGSG), serve as a signal peptide directing secretion. 6 consecutive Cadherin domains span residues 31-134 (QLRY…PPVF), 135-243 (PTTE…APAF), 244-351 (DRAI…APKI), 352-456 (IVTS…APAF), 457-566 (AQSE…APTL), and 582-679 (VPRS…APKA). Residues 31-697 (QLRYSVPEEA…ASESSVVDVN (667 aa)) are Extracellular-facing. Residue N258 is glycosylated (N-linked (GlcNAc...) asparagine). N549 is a glycosylation site (N-linked (GlcNAc...) asparagine). The helical transmembrane segment at 698–718 (VYLIIAICAVSSLLVLTLVLY) threads the bilayer. Topologically, residues 719–946 (TALRCSALPT…GNSTTDNSDQ (228 aa)) are cytoplasmic. PXXP repeat units follow at residues 734 to 737 (PGKP), 774 to 777 (PSVP), 795 to 798 (PRQP), 828 to 831 (PGGP), 869 to 872 (PGNP), and 887 to 890 (PGSP). The 6 X 4 AA repeats of P-X-X-P stretch occupies residues 734–890 (PGKPMLVCSS…PDKFIIPGSP (157 aa)). 2 disordered regions span residues 826–852 (AGPG…EVSP) and 865–946 (FKYG…NSDQ). Over residues 905–919 (DKSDFITFGKKEETK) the composition is skewed to basic and acidic residues.

The protein resides in the cell membrane. Its function is as follows. Potential calcium-dependent cell-adhesion protein. May be involved in the establishment and maintenance of specific neuronal connections in the brain. The protein is Protocadherin alpha-10 of Mus musculus (Mouse).